A 747-amino-acid chain; its full sequence is RNA polymerase II assembly factor rtp1 (747 aa).

HEAT repeat units lie at residues 37–75, 103–141, 320–358, 381–418, 459–485, 486–523, and 557–594; these read NYFL…LLGV, QIYN…NCHE, DIIR…VCGT, SQLA…NVDS, EENE…LDLE, NPIS…SKDD, and INPV…KYDD.

The protein belongs to the Tango6 family. Interacts with RNA polymerase II subunits. Interacts with nuclear pore complex subunits.

Its subcellular location is the cytoplasm. The protein localises to the nucleus. Its function is as follows. Required for the cytoplasmic assembly and the nuclear import of RNA polymerase II. The chain is RNA polymerase II assembly factor rtp1 from Schizosaccharomyces pombe (strain 972 / ATCC 24843) (Fission yeast).